The primary structure comprises 101 residues: MPFSHTKIVGPAGRYGARYGMGIRRKITAIEVKQRGKHRCPSCRSLVRLQRIAFGIWKCPKCGFTFAGGAWTPQTIMGKALAPEELKEVEAQKARWRETAR.

The C4-type zinc finger occupies 40 to 62 (CPSCRSLVRLQRIAFGIWKCPKC).

It belongs to the eukaryotic ribosomal protein eL43 family. Requires Zn(2+) as cofactor.

The polypeptide is Large ribosomal subunit protein eL43 (Pyrobaculum neutrophilum (strain DSM 2338 / JCM 9278 / NBRC 100436 / V24Sta) (Thermoproteus neutrophilus)).